A 459-amino-acid polypeptide reads, in one-letter code: Cysteine--tRNA ligase (459 aa).

Cys28 is a binding site for Zn(2+). Residues 30-40 (VTVYDLCHIGH) carry the 'HIGH' region motif. Positions 209, 234, and 238 each coordinate Zn(2+). Residues 266 to 270 (KMSKS) carry the 'KMSKS' region motif. Residue Lys269 coordinates ATP.

This sequence belongs to the class-I aminoacyl-tRNA synthetase family. Monomer. Zn(2+) serves as cofactor.

The protein localises to the cytoplasm. The catalysed reaction is tRNA(Cys) + L-cysteine + ATP = L-cysteinyl-tRNA(Cys) + AMP + diphosphate. This chain is Cysteine--tRNA ligase, found in Haemophilus influenzae (strain PittGG).